The primary structure comprises 560 residues: Interferon alpha/beta receptor 1 (560 aa).

A signal peptide spans Met-1–Gly-24. Topologically, residues Glu-25 to Lys-437 are extracellular. 2 N-linked (GlcNAc...) asparagine glycosylation sites follow: Asn-47 and Asn-55. A disulfide bridge links Cys-76 with Cys-84. Asn-85, Asn-108, Asn-109, and Asn-172 each carry an N-linked (GlcNAc...) asparagine glycan. Fibronectin type-III domains are found at residues Gln-126 to Arg-226, Ser-231 to Lys-329, and Phe-333 to Gly-433. A disulfide bridge links Cys-199 with Cys-220. 5 N-linked (GlcNAc...) asparagine glycosylation sites follow: Asn-222, Asn-285, Asn-313, Asn-359, and Asn-377. A disulfide bridge links Cys-283 with Cys-291. Cys-404 and Cys-427 form a disulfide bridge. An N-linked (GlcNAc...) asparagine glycan is attached at Asn-434. Residues Thr-438 to Val-458 traverse the membrane as a helical segment. The Cytoplasmic portion of the chain corresponds to Arg-459–Val-560. A lipid anchor (S-palmitoyl cysteine) is attached at Cys-464. 2 positions are modified to phosphotyrosine; by TYK2: Tyr-467 and Tyr-482. An important for interaction with TYK2 region spans residues Leu-492 to Glu-501. Phosphoserine occurs at positions 496 and 536. The tract at residues Val-524–Val-560 is disordered. Residues Asn-529–Ser-540 show a composition bias toward polar residues.

It belongs to the type II cytokine receptor family. In terms of assembly, heterodimer with IFNAR2; forming the receptor for type I interferon. Interacts with TYK2. Interacts with STAT1 and STAT2; the interaction requires its phosphorylation at Tyr-482. Interacts (serine-phosphorylated form) with FBXW11, the substrate recognition component of a SCF (SKP1-CUL1-F-box protein) E3 ubiquitin-protein ligase complex. Interacts with SHMT2; this promotes interaction with ABRAXAS2 and the BRISC complex. Interacts with TRIM10; this interaction prevents association between IFNAR1 and TYK2. Post-translationally, ubiquitinated, leading to its internalization and degradation. Polyubiquitinated via 'Lys-48'-linked and 'Lys-63'-linked ubiquitin chains, leading to receptor internalization and lysosomal degradation. The 'Lys-63'-linked ubiquitin chains are cleaved off by the BRISC complex. Phosphorylated on tyrosine residues in response to interferon-binding: phosphorylation by TYK2 tyrosine kinase creates docking sites for STAT proteins. Phosphorylated on serine residues in response to interferon binding; this promotes interaction with FBXW11 and ubiquitination. In terms of processing, palmitoylation at Cys-464 is required for the activation of STAT1 and STAT2. Expressed in the endometrium. Expressed in all tissues examined except conceptus at day 15 of pregnancy.

Its subcellular location is the cell membrane. The protein localises to the late endosome. It is found in the lysosome. Its function is as follows. Together with IFNAR2, forms the heterodimeric receptor for type I interferons (including interferons alpha, beta, epsilon, omega and kappa). Type I interferon binding activates the JAK-STAT signaling cascade, resulting in transcriptional activation or repression of interferon-regulated genes that encode the effectors of the interferon response. Mechanistically, type I interferon-binding brings the IFNAR1 and IFNAR2 subunits into close proximity with one another, driving their associated Janus kinases (JAKs) (TYK2 bound to IFNAR1 and JAK1 bound to IFNAR2) to cross-phosphorylate one another. The activated kinases phosphorylate specific tyrosine residues on the intracellular domains of IFNAR1 and IFNAR2, forming docking sites for the STAT transcription factors. STAT proteins are then phosphorylated by the JAKs, promoting their translocation into the nucleus to regulate expression of interferon-regulated genes. Can also act independently of IFNAR2: form an active IFNB1 receptor by itself and activate a signaling cascade that does not involve activation of the JAK-STAT pathway. The polypeptide is Interferon alpha/beta receptor 1 (IFNAR1) (Ovis aries (Sheep)).